A 541-amino-acid chain; its full sequence is T-complex protein 1 subunit epsilon (541 aa).

A2 carries the post-translational modification N-acetylalanine. K20 is covalently cross-linked (Glycyl lysine isopeptide (Lys-Gly) (interchain with G-Cter in SUMO2)). Position 26 is a phosphoserine (S26). G53 is an ADP binding site. G53 contacts ATP. D104 is a binding site for Mg(2+). The ADP site is built by G105, T106, T107, and S175. ATP-binding residues include T106 and T107. Residues K210, K214, K265, K275, and K279 each participate in a glycyl lysine isopeptide (Lys-Gly) (interchain with G-Cter in SUMO2) cross-link. S346 is modified (phosphoserine). A Glycyl lysine isopeptide (Lys-Gly) (interchain with G-Cter in SUMO2) cross-link involves residue K392. The ADP site is built by G422, D492, E508, and K513. Position 422 (G422) interacts with ATP. S539 is subject to Phosphoserine.

It belongs to the TCP-1 chaperonin family. In terms of assembly, component of the chaperonin-containing T-complex (TRiC), a hexadecamer composed of two identical back-to-back stacked rings enclosing a protein folding chamber. Each ring is made up of eight different subunits: TCP1/CCT1, CCT2, CCT3, CCT4, CCT5, CCT6A/CCT6, CCT7, CCT8. Interacts with PACRG. Interacts with DNAAF4. Interacts with DLEC1. Interacts with SPMAP2. Post-translationally, ubiquitinated by the DCX(DCAF12) complex specifically recognizes the diglutamate (Glu-Glu) at the C-terminus, leading to its degradation.

The protein resides in the cytoplasm. Its subcellular location is the cytoskeleton. The protein localises to the microtubule organizing center. It localises to the centrosome. The catalysed reaction is ATP + H2O = ADP + phosphate + H(+). Its function is as follows. Component of the chaperonin-containing T-complex (TRiC), a molecular chaperone complex that assists the folding of actin, tubulin and other proteins upon ATP hydrolysis. The TRiC complex mediates the folding of WRAP53/TCAB1, thereby regulating telomere maintenance. As part of the TRiC complex may play a role in the assembly of BBSome, a complex involved in ciliogenesis regulating transports vesicles to the cilia. The sequence is that of T-complex protein 1 subunit epsilon (Cct5) from Rattus norvegicus (Rat).